The chain runs to 536 residues: Signal peptide peptidase-like 5 (536 aa).

The N-terminal stretch at 1 to 29 (MSLPPFTCRLLAAAAALYLIGLLCVGADT) is a signal peptide. Over 30–186 (KDVTAPKIPG…VELLLYAPKS (157 aa)) the chain is Lumenal. Residues 94-170 (SNLTSKLSWS…TSSGDALKKS (77 aa)) form the PA domain. 2 N-linked (GlcNAc...) asparagine glycosylation sites follow: asparagine 95 and asparagine 151. A helical membrane pass occupies residues 187–207 (PIVDYAVVFLWLMSVGTVFVA). Residues 208 to 243 (SVWSHVTSPKKNDEQYDELSPKKSSNVDATKGGAEE) are Cytoplasmic-facing. Residues 218–238 (KNDEQYDELSPKKSSNVDATK) are disordered. Residues 244 to 264 (ETLDISAMGAVIFVISASTFL) traverse the membrane as a helical segment. The Lumenal portion of the chain corresponds to 265–273 (VLLFFFMSS). Residues 274 to 296 (WFILILTIFFVIGGMQGMHNINV) traverse the membrane as a helical segment. Over 297 to 318 (TLITRRCSKCGQKNLKLPLLGN) the chain is Cytoplasmic. The helical transmembrane segment at 319–339 (TSILSLVVLLFCFVVAILWFM) threads the bilayer. The Lumenal portion of the chain corresponds to 340-344 (NRKTS). Residues 345 to 365 (HAWAGQDIFGICMMINVLQVA) form a helical membrane-spanning segment. The Cytoplasmic segment spans residues 366–374 (RLPNIRVAT). Residues 375-395 (ILLCCAFFYDIFWVFISPLIF) form a helical membrane-spanning segment. Aspartate 384 is an active-site residue. The Lumenal portion of the chain corresponds to 396 to 428 (KQSVMIAVARGSKDTGESIPMLLRIPRLSDPWG). Residues 429 to 449 (GYNMIGFGDILFPGLLICFIF) traverse the membrane as a helical segment. Residue aspartate 437 is part of the active site. Topologically, residues 450-463 (RFDKENNKGVSNGY) are cytoplasmic. The chain crosses the membrane as a helical span at residues 464–484 (FPWLMFGYGLGLFLTYLGLYV). Over 485 to 489 (MNGHG) the chain is Lumenal. Residues 490–510 (QPALLYLVPCTLGITVILGLV) form a helical membrane-spanning segment. The short motif at 491–493 (PAL) is the PAL element. Residues 511 to 536 (RKELRDLWNYGTQQPSAADVNPSPEA) are Cytoplasmic-facing.

Belongs to the peptidase A22B family. Post-translationally, glycosylated.

It is found in the endosome membrane. Its function is as follows. Intramembrane-cleaving aspartic protease (I-CLiP) that cleaves type II membrane signal peptides in the hydrophobic plane of the membrane. The sequence is that of Signal peptide peptidase-like 5 (SPPL5) from Arabidopsis thaliana (Mouse-ear cress).